We begin with the raw amino-acid sequence, 268 residues long: Lipase 1 (268 aa).

The first 29 residues, 1 to 29 (MRRFRLVGFLSSLVLAAGAALTGAATAQA), serve as a signal peptide directing secretion. Serine 44 functions as the Nucleophile in the catalytic mechanism. Disulfide bonds link cysteine 61/cysteine 86, cysteine 127/cysteine 135, and cysteine 185/cysteine 231. Residue histidine 250 is part of the active site.

It belongs to the 'GDSL' lipolytic enzyme family. As to quaternary structure, monomer.

The protein localises to the secreted. The catalysed reaction is a triacylglycerol + H2O = a diacylglycerol + a fatty acid + H(+). Its activity is regulated as follows. Strongly inhibited by Ag(+). The cations Ca(2+), Mg(2+), Co(2+) and Cu(2+) do not significantly reduce the lipolytic activity of SCO1725. Is also inhibited by DTT in vitro, but not by EDTA or by the reagent masking SH-groups, p-hydroxymercuribenzoate (pHMB). Is resistant to PMSF inhibition, except in the presence of Ca(2+). Is also strongly inhibited by 3,4-dichloroisocoumarin (DCI), another inhibitor of serine hydrolases. Addition of tetrahydrofuran and 1,4-dioxane significantly increases (2- and 4- fold, respectively) hydrolytic activity of lipase towards p-nitrophenyl caprylate. Its function is as follows. Catalyzes the hydrolysis of fatty acid esters with a preference for mid-length acyl chain (C10-C16). Is able to hydrolyze the triacylglycerol triolein and mixed triacylglycerols from a wide range of natural oils; better activity is obtained with corn-, wheat germ- and olive oil that have higher content of linoleic and/or oleic acid (C18:2; C18:1, cis). Tween detergents are also substrates for this enzyme. Displays arylesterase activity towards p-nitrophenyl alkanoate esters and alpha- and beta-naphthyl esters. This chain is Lipase 1, found in Streptomyces coelicolor (strain ATCC BAA-471 / A3(2) / M145).